The following is a 313-amino-acid chain: Thymidylate synthase (313 aa).

The interval 1–28 (MPVAGSELPRRPLPPAAQERDAEPRPPH) is disordered. Positions 18 to 28 (QERDAEPRPPH) are enriched in basic and acidic residues. Arg-50 lines the dUMP pocket. Residue Ser-114 is modified to Phosphoserine. DUMP contacts are provided by residues 175–176 (RR), 195–196 (CH), 215–218 (RSGD), Asn-226, and 256–258 (HIY). Catalysis depends on Cys-195, which acts as the Nucleophile. Asp-218 lines the (6R)-5,10-methylene-5,6,7,8-tetrahydrofolate pocket. Glycyl lysine isopeptide (Lys-Gly) (interchain with G-Cter in SUMO2) cross-links involve residues Lys-287, Lys-292, and Lys-308. Residue Ala-312 participates in (6R)-5,10-methylene-5,6,7,8-tetrahydrofolate binding.

It belongs to the thymidylate synthase family. As to quaternary structure, homodimer.

It is found in the nucleus. It localises to the cytoplasm. Its subcellular location is the mitochondrion. The protein resides in the mitochondrion matrix. The protein localises to the mitochondrion inner membrane. It catalyses the reaction dUMP + (6R)-5,10-methylene-5,6,7,8-tetrahydrofolate = 7,8-dihydrofolate + dTMP. It participates in pyrimidine metabolism; dTTP biosynthesis. Functionally, catalyzes the reductive methylation of 2'-deoxyuridine 5'-monophosphate (dUMP) to thymidine 5'-monophosphate (dTMP), using the cosubstrate, 5,10- methylenetetrahydrofolate (CH2H4folate) as a 1-carbon donor and reductant and contributes to the de novo mitochondrial thymidylate biosynthesis pathway. The chain is Thymidylate synthase from Homo sapiens (Human).